The primary structure comprises 208 residues: Thymidylate kinase (208 aa).

ATP is bound at residue 10 to 17 (GPEGSGKT).

The protein belongs to the thymidylate kinase family.

The enzyme catalyses dTMP + ATP = dTDP + ADP. Phosphorylation of dTMP to form dTDP in both de novo and salvage pathways of dTTP synthesis. This is Thymidylate kinase from Bacillus cereus (strain AH187).